A 324-amino-acid chain; its full sequence is Acetyl-coenzyme A carboxylase carboxyl transferase subunit alpha (324 aa).

The region spanning 44–298 is the CoA carboxyltransferase C-terminal domain; that stretch reads QLEAKATQLR…KTAIVKSLDD (255 aa).

This sequence belongs to the AccA family. Acetyl-CoA carboxylase is a heterohexamer composed of biotin carboxyl carrier protein (AccB), biotin carboxylase (AccC) and two subunits each of ACCase subunit alpha (AccA) and ACCase subunit beta (AccD).

The protein localises to the cytoplasm. It catalyses the reaction N(6)-carboxybiotinyl-L-lysyl-[protein] + acetyl-CoA = N(6)-biotinyl-L-lysyl-[protein] + malonyl-CoA. Its pathway is lipid metabolism; malonyl-CoA biosynthesis; malonyl-CoA from acetyl-CoA: step 1/1. Component of the acetyl coenzyme A carboxylase (ACC) complex. First, biotin carboxylase catalyzes the carboxylation of biotin on its carrier protein (BCCP) and then the CO(2) group is transferred by the carboxyltransferase to acetyl-CoA to form malonyl-CoA. The chain is Acetyl-coenzyme A carboxylase carboxyl transferase subunit alpha from Trichodesmium erythraeum (strain IMS101).